Reading from the N-terminus, the 339-residue chain is Ketol-acid reductoisomerase (NADP(+)) (339 aa).

One can recognise a KARI N-terminal Rossmann domain in the interval 1–182 (MRVYYDRDAD…GGGRAGIIET (182 aa)). NADP(+) contacts are provided by residues 24 to 27 (YGSQ), arginine 48, serine 51, serine 53, and 83 to 86 (DELQ). The active site involves histidine 108. Glycine 134 serves as a coordination point for NADP(+). Positions 183 to 328 (TFREECETDL…AKLRDMMPWI (146 aa)) constitute a KARI C-terminal knotted domain. 4 residues coordinate Mg(2+): aspartate 191, glutamate 195, glutamate 227, and glutamate 231. Serine 252 serves as a coordination point for substrate.

It belongs to the ketol-acid reductoisomerase family. Mg(2+) is required as a cofactor.

It carries out the reaction (2R)-2,3-dihydroxy-3-methylbutanoate + NADP(+) = (2S)-2-acetolactate + NADPH + H(+). The catalysed reaction is (2R,3R)-2,3-dihydroxy-3-methylpentanoate + NADP(+) = (S)-2-ethyl-2-hydroxy-3-oxobutanoate + NADPH + H(+). It functions in the pathway amino-acid biosynthesis; L-isoleucine biosynthesis; L-isoleucine from 2-oxobutanoate: step 2/4. Its pathway is amino-acid biosynthesis; L-valine biosynthesis; L-valine from pyruvate: step 2/4. In terms of biological role, involved in the biosynthesis of branched-chain amino acids (BCAA). Catalyzes an alkyl-migration followed by a ketol-acid reduction of (S)-2-acetolactate (S2AL) to yield (R)-2,3-dihydroxy-isovalerate. In the isomerase reaction, S2AL is rearranged via a Mg-dependent methyl migration to produce 3-hydroxy-3-methyl-2-ketobutyrate (HMKB). In the reductase reaction, this 2-ketoacid undergoes a metal-dependent reduction by NADPH to yield (R)-2,3-dihydroxy-isovalerate. The chain is Ketol-acid reductoisomerase (NADP(+)) from Nitrobacter hamburgensis (strain DSM 10229 / NCIMB 13809 / X14).